The chain runs to 334 residues: Tryptophan--tRNA ligase (334 aa).

Residues 11-13 (QPS) and 19-20 (GN) contribute to the ATP site. The short motif at 12 to 20 (PSGELTIGN) is the 'HIGH' region element. Residue aspartate 135 coordinates L-tryptophan. Residues 147–149 (GED), valine 186, and 195–199 (KMSKS) each bind ATP. The 'KMSKS' region signature appears at 195 to 199 (KMSKS).

This sequence belongs to the class-I aminoacyl-tRNA synthetase family. In terms of assembly, homodimer.

It is found in the cytoplasm. It catalyses the reaction tRNA(Trp) + L-tryptophan + ATP = L-tryptophyl-tRNA(Trp) + AMP + diphosphate + H(+). Functionally, catalyzes the attachment of tryptophan to tRNA(Trp). The sequence is that of Tryptophan--tRNA ligase from Salmonella typhi.